Consider the following 355-residue polypeptide: MSFDVLTINPGSTSTKLAVYQGDKVLFEETVRHTMQELADFNNVQEQFDFRWQVLRRVMDAHGYDVKKLQAVVGRGGLLRPVAGGTYMVTEKMIDDLKENKYGEHASNLGALLAKKLADELTIPSFIVDPVVVDEMQEIARISGNAFIARKSIFHALNHKAAGRKIAKELGKDYEKMNFVIAHLGGGISVAAHRQGKAVDVNNALDGDGPFSPERSGSLPMNDFLEACFSGKWTKRELHELIVGRGGMISYLGTNSMLEVEAKVQAGDVKAIEAFDAMAYQVSKEIGACSVVLQGKVDAIILTGGLARSELFTNKIIEQTNWITSVIIEPGEDELEALNSGVQRVLAGLEKEKEY.

The protein belongs to the acetokinase family.

It is found in the cytoplasm. It catalyses the reaction butanoate + ATP = butanoyl phosphate + ADP. In Listeria monocytogenes serotype 4b (strain CLIP80459), this protein is Probable butyrate kinase.